The following is a 794-amino-acid chain: E3 ubiquitin-protein ligase wwp-1 (794 aa).

Residues 1 to 16 are compositionally biased toward low complexity; that stretch reads MARNEPSSQQPSSSGS. 2 disordered regions span residues 1–31 and 155–198; these read MARN…KPSK and RSAG…AAPT. Residues 10-124 form the C2 domain; sequence QPSSSGSNGT…TRNENGEFKN (115 aa). The span at 17–27 shows a compositional bias: polar residues; it reads NGTPAQQNGSA. A compositionally biased stretch (low complexity) spans 161–186; the sequence is AETAASASSEASTSNGVATSSSARRP. WW domains lie at 219 to 252, 253 to 286, 324 to 358, and 366 to 399; these read EQLP…RPST, QPLP…RPTA, GPLP…DPRT, and QPLP…DPRT. The 335-residue stretch at 460–794 folds into the HECT domain; it reads NAVDLRRRLY…IEMTEGFGNE (335 aa). The Glycyl thioester intermediate role is filled by cysteine 762.

As to quaternary structure, interacts (via WW domains) with Kruppel-like factor klf-1. Interacts with ubiquitin-conjugating enzyme E2 ubc-18. Expressed in neurons localized in the head and tail of adults.

The enzyme catalyses S-ubiquitinyl-[E2 ubiquitin-conjugating enzyme]-L-cysteine + [acceptor protein]-L-lysine = [E2 ubiquitin-conjugating enzyme]-L-cysteine + N(6)-ubiquitinyl-[acceptor protein]-L-lysine.. It participates in protein modification; protein ubiquitination. Its function is as follows. E3 ubiquitin-protein ligase which accepts ubiquitin from an E2 ubiquitin-conjugating enzyme in the form of a thioester and then directly transfers the ubiquitin to targeted substrates. Ubiquitinates klf-1. Required for diet restriction-mediated lifespan extension, acting in concert with Kruppel-like factor klf-1 in the intestine to perhaps modulate genes involved in lipid metabolism. Probably acting downstream of the Insulin/IGF-1-like signaling (IIS) mediated pathway, plays a role in the immune response to infection by the Gram-negative bacterium P.aeruginosa, at least partly in response to bacterial pore-forming toxins. In Caenorhabditis elegans, this protein is E3 ubiquitin-protein ligase wwp-1.